The chain runs to 340 residues: DNA-directed RNA polymerase subunit alpha (340 aa).

Positions Met-1–Lys-233 are alpha N-terminal domain (alpha-NTD). Positions Arg-263–Asp-340 are alpha C-terminal domain (alpha-CTD).

The protein belongs to the RNA polymerase alpha chain family. In plastids the minimal PEP RNA polymerase catalytic core is composed of four subunits: alpha, beta, beta', and beta''. When a (nuclear-encoded) sigma factor is associated with the core the holoenzyme is formed, which can initiate transcription.

It is found in the plastid. Its subcellular location is the chloroplast. It catalyses the reaction RNA(n) + a ribonucleoside 5'-triphosphate = RNA(n+1) + diphosphate. In terms of biological role, DNA-dependent RNA polymerase catalyzes the transcription of DNA into RNA using the four ribonucleoside triphosphates as substrates. The polypeptide is DNA-directed RNA polymerase subunit alpha (rpoA) (Anthoceros angustus (Hornwort)).